Here is a 288-residue protein sequence, read N- to C-terminus: Inositol monophosphatase 2 (288 aa).

Mg(2+) is bound by residues E81, D101, I103, and D104. Substrate is bound at residue E81. Residues 103–106, 205–207, Q224, and D231 contribute to the substrate site; these read IDGT and GSS. D231 provides a ligand contact to Mg(2+).

Belongs to the inositol monophosphatase superfamily. In terms of assembly, homodimer. Mg(2+) serves as cofactor.

Its subcellular location is the cytoplasm. The enzyme catalyses a myo-inositol phosphate + H2O = myo-inositol + phosphate. It carries out the reaction 1D-myo-inositol 1-phosphate + H2O = myo-inositol + phosphate. The catalysed reaction is 1D-myo-inositol 2-phosphate + H2O = myo-inositol + phosphate. It catalyses the reaction 1D-myo-inositol 3-phosphate + H2O = myo-inositol + phosphate. The enzyme catalyses 1D-myo-inositol 4-phosphate + H2O = myo-inositol + phosphate. It carries out the reaction 1D-myo-inositol 5-phosphate + H2O = myo-inositol + phosphate. The catalysed reaction is 1D-myo-inositol 6-phosphate + H2O = myo-inositol + phosphate. It catalyses the reaction alpha-D-glucose 1-phosphate + H2O = D-glucose + phosphate. The enzyme catalyses glycerol 2-phosphate + H2O = glycerol + phosphate. It carries out the reaction adenosine 2'-phosphate + H2O = adenosine + phosphate. Its pathway is polyol metabolism; myo-inositol biosynthesis; myo-inositol from D-glucose 6-phosphate: step 2/2. Its activity is regulated as follows. Inhibited by high Li(+) and restricted Mg(2+) concentrations. Phosphatase that can use myo-inositol monophosphates, myo-inositol 1,4-diphosphate, scyllo-inositol-1,4-diphosphate, glucose-1-phosphate, beta-glycerophosphate and 2'-AMP as substrates in vitro. It is likely that IMPA2 has an as yet unidentified in vivo substrate(s). Has been implicated as the pharmacological target for lithium (Li(+)) action in brain. This Homo sapiens (Human) protein is Inositol monophosphatase 2.